Consider the following 894-residue polypeptide: Septin and tuftelin-interacting protein 1 homolog (894 aa).

Disordered stretches follow at residues 71–149 and 187–225; these read YEPN…DKPV and NAGL…RSLG. Basic and acidic residues predominate over residues 73-84; sequence PNEHKLKNKDGE. Basic residues predominate over residues 97-126; sequence KKKKKEKKEKKQKKKEKKEKKEKKNKKKNK. The G-patch domain maps to 149–195; it reads VGGIGAALLSKMGYKGTGGLGRDGGGMVEPIKVQVRPKNAGLASVTE. A compositionally biased stretch (acidic residues) spans 202–217; it reads DDSDDSDQSEGDTDSD. The stretch at 329–449 forms a coiled coil; that stretch reads KQIDIQNQDN…SDNNDNSSLE (121 aa). A disordered region spans residues 785-821; it reads NNNNNNNINNSYQQQNQQQPIKPISSPSLNSSNNNNI.

This sequence belongs to the TFP11/STIP family. Identified in the spliceosome C complex.

It is found in the cytoplasm. The protein resides in the nucleus. Functionally, may be involved in pre-mRNA splicing. The polypeptide is Septin and tuftelin-interacting protein 1 homolog (stip-1) (Dictyostelium discoideum (Social amoeba)).